The sequence spans 161 residues: Host protease inhibitor (161 aa).

Functionally, plays a role in the inhibition of bacterial toxin-antitoxin system by blocking the action of host Lon protease. The polypeptide is Host protease inhibitor (pin) (Enterobacteria phage T4 (Bacteriophage T4)).